The primary structure comprises 347 residues: Purine-rich element-binding protein gamma (347 aa).

Disordered stretches follow at residues 1-34 and 133-169; these read MERA…YPQA and GHRQ…HPHS. Over residues 9–24 the composition is skewed to gly residues; sequence GGGGRGRGGKNVGGSG. A DNA-binding region spans residues 51–293; sequence AGGAAEIQEL…GIFLKVSEVR (243 aa). Residues 134–146 are compositionally biased toward basic and acidic residues; sequence HRQEHGHSKEQGS. Ser-160, Ser-163, and Ser-339 each carry phosphoserine.

It belongs to the PUR DNA-binding protein family. Isoform 1 is expressed in testis and glioblastoma. Isoform 2 is expressed in fetal lung.

The protein resides in the nucleus. The sequence is that of Purine-rich element-binding protein gamma (PURG) from Homo sapiens (Human).